Consider the following 242-residue polypeptide: MASDINALKYKKVLLKVSGEALMGNKQFGHEYEVIKKIAEDIKEVIDLGLEVAIVVGGGNIYRGINAALVGMDRASADYIGMLATVMNALTLQNVMESLGIYTRVLSAIPMMSVCEPYIRRKAKRHMEKKRVVIFAGGTGNPFCTTDSAAVLRAIEMNCDILLKATQVDGVYDSDPKKNPNAKKYFTISYKDVINNHLQVMDTAAIAVARENKLPIRVFSIKEHGNFARVIQDKGQYTTIGE.

Residue 16-19 (KVSG) participates in ATP binding. UMP is bound at residue G58. ATP-binding residues include G59 and R63. UMP contacts are provided by residues D78 and 139–146 (TGNPFCTT). T166, Q167, Y172, and D175 together coordinate ATP.

Belongs to the UMP kinase family. As to quaternary structure, homohexamer.

Its subcellular location is the cytoplasm. The catalysed reaction is UMP + ATP = UDP + ADP. Its pathway is pyrimidine metabolism; CTP biosynthesis via de novo pathway; UDP from UMP (UMPK route): step 1/1. Inhibited by UTP. Its function is as follows. Catalyzes the reversible phosphorylation of UMP to UDP. The protein is Uridylate kinase of Rickettsia prowazekii (strain Madrid E).